The following is a 156-amino-acid chain: MPRRREVPKREVLPDPKFGNVDVAKFMNVLMLSGKKSVAERIVYGAFEQIQTKGGKDPLEVFTVALNNVKPVVEVKSRRVGGANYQVPVEVRPSRRMALAMRWLREAAKKRSEKSMALRLAGELSEAAEGRGGAMKKRDEVHRMAEANKAFSHFRF.

The protein belongs to the universal ribosomal protein uS7 family. In terms of assembly, part of the 30S ribosomal subunit. Contacts proteins S9 and S11.

Its function is as follows. One of the primary rRNA binding proteins, it binds directly to 16S rRNA where it nucleates assembly of the head domain of the 30S subunit. Is located at the subunit interface close to the decoding center, probably blocks exit of the E-site tRNA. The protein is Small ribosomal subunit protein uS7 of Paraburkholderia phymatum (strain DSM 17167 / CIP 108236 / LMG 21445 / STM815) (Burkholderia phymatum).